Here is a 277-residue protein sequence, read N- to C-terminus: Carbonyl reductase [NADPH] 1 (277 aa).

S2 carries the N-acetylserine modification. 2 positions are modified to phosphoserine: S2 and S30. NADP(+)-binding positions include 10 to 34, 63 to 64, and N90; these read VTGGNKGIGLAIVRDLCRLFSGDVV and DI. Glutathione contacts are provided by residues 95–97 and Q106; that span reads FKV. S140 serves as a coordination point for substrate. A glutathione-binding site is contributed by 193-194; the sequence is AY. Y194 (proton acceptor) is an active-site residue. Residues 194 to 198 and 231 to 233 contribute to the NADP(+) site; these read YGVTK and VRT. K239 carries the post-translational modification N6-1-carboxyethyl lysine.

Belongs to the short-chain dehydrogenases/reductases (SDR) family. Monomer.

The protein resides in the cytoplasm. The enzyme catalyses a secondary alcohol + NADP(+) = a ketone + NADPH + H(+). It catalyses the reaction prostaglandin F2alpha + NADP(+) = prostaglandin E2 + NADPH + H(+). The catalysed reaction is prostaglandin E1 + NADP(+) = 15-oxoprostaglandin E1 + NADPH + H(+). It carries out the reaction menadione + NADPH + H(+) = menadiol + NADP(+). The enzyme catalyses prostaglandin D2 + NADP(+) = 15-oxoprostaglandin D2 + NADPH + H(+). It catalyses the reaction prostaglandin E2 + NADP(+) = 15-oxoprostaglandin E2 + NADPH + H(+). The catalysed reaction is prostaglandin F2alpha + NADP(+) = 15-oxoprostaglandin F2alpha + NADPH + H(+). It carries out the reaction daunorubicin + NADPH + H(+) = 13-dihydrodaunorubicin + NADP(+). The enzyme catalyses S-nitrosoglutathione + NADPH + H(+) = S-(hydroxysulfenamide)glutathione + NADP(+). It catalyses the reaction a primary alcohol + NADP(+) = an aldehyde + NADPH + H(+). The catalysed reaction is cortisol + NADPH + H(+) = 20beta-dihydrocortisol + NADP(+). It carries out the reaction corticosterone + NADPH + H(+) = 20beta-dihydrocorticosterone + NADP(+). In terms of biological role, NADPH-dependent reductase with broad substrate specificity. Catalyzes the reduction of a wide variety of carbonyl compounds including quinones, prostaglandins, menadione, plus various xenobiotics. Catalyzes the reduction of the antitumor anthracyclines doxorubicin and daunorubicin to the cardiotoxic compounds doxorubicinol and daunorubicinol. Can convert prostaglandin E to prostaglandin F2-alpha. Can bind glutathione, which explains its higher affinity for glutathione-conjugated substrates. Catalyzes the reduction of S-nitrosoglutathione. In addition, participates in the glucocorticoid metabolism by catalyzing the NADPH-dependent cortisol/corticosterone into 20beta-dihydrocortisol (20b-DHF) or 20beta-corticosterone (20b-DHB), which are weak agonists of NR3C1 and NR3C2 in adipose tissue. This chain is Carbonyl reductase [NADPH] 1, found in Pongo abelii (Sumatran orangutan).